A 437-amino-acid chain; its full sequence is Leucine-rich repeat flightless-interacting protein 2 (437 aa).

Ser-18 is modified (phosphoserine). Residues 22–49 (EALSNIAREAEARLAAKRAARAEARDIR) adopt a coiled-coil conformation. Residues 33–62 (ARLAAKRAARAEARDIRMRELERQQRESSS) are compositionally biased toward basic and acidic residues. Positions 33 to 152 (ARLAAKRAAR…DTSLSELRES (120 aa)) are disordered. A compositionally biased stretch (polar residues) spans 63 to 74 (KDITGTHWSRAS). The span at 77–105 (KRRDMMYDSIKDRSSRVSSLLDEKSDKQY) shows a compositional bias: basic and acidic residues. A compositionally biased stretch (polar residues) spans 110-139 (TRPSSRNSASATTPLSGNSSRRGSGDTSSL). A phosphoserine mark is found at Ser-114, Ser-117, Ser-125, Ser-129, and Ser-133. Thr-136 bears the Phosphothreonine mark. A phosphoserine mark is found at Ser-137 and Ser-138. Coiled-coil stretches lie at residues 143–239 (DTSL…LIEK) and 282–430 (LDVR…KANR).

The protein belongs to the LRRFIP family. As to quaternary structure, interacts with DVL3 and FLII. Weakly interacts with MYD88 in resting cells. Following LPS-stimulation, the interaction with MYD88 is rapidly enhanced; the complex gradually dissociates to basal levels after 6 hours of stimulation. Interaction with MYD88 is regulated by LPS-induced phosphorylation. In the presence of LPS, competes with FLII for MYD88-binding.

Functionally, may function as activator of the canonical Wnt signaling pathway, in association with DVL3, upstream of CTNNB1/beta-catenin. Positively regulates Toll-like receptor (TLR) signaling in response to agonist probably by competing with the negative FLII regulator for MYD88-binding. The sequence is that of Leucine-rich repeat flightless-interacting protein 2 (Lrrfip2) from Rattus norvegicus (Rat).